The primary structure comprises 623 residues: Low affinity potassium transport system protein Kup (623 aa).

12 helical membrane passes run 10-30 (LSAV…TSPL), 47-67 (PDVV…IVSV), 102-122 (ILVI…VITP), 138-158 (PALD…LFVI), 166-186 (VGKL…LLGL), 214-234 (VSFF…ALYA), 248-268 (WFTV…ALLL), 277-297 (PFFL…ATLA), 338-358 (IYIP…IVGF), 364-384 (LAAA…VLFC), 396-416 (FFVY…FSAN), and 420-440 (LFSG…IMTT).

Belongs to the HAK/KUP transporter (TC 2.A.72) family.

The protein localises to the cell inner membrane. The catalysed reaction is K(+)(in) + H(+)(in) = K(+)(out) + H(+)(out). In terms of biological role, responsible for the low-affinity transport of potassium into the cell. Likely operates as a K(+):H(+) symporter. The polypeptide is Low affinity potassium transport system protein Kup (Yersinia enterocolitica serotype O:8 / biotype 1B (strain NCTC 13174 / 8081)).